A 1072-amino-acid chain; its full sequence is Carbamoyl phosphate synthase large chain (1072 aa).

Residues 1-401 (MPKRLDINTI…SLLKAVRSLE (401 aa)) are carboxyphosphate synthetic domain. 12 residues coordinate ATP: R129, R169, G175, G176, K208, I210, E215, G241, V242, H243, Q284, and E298. The region spanning 133 to 327 (RTLMQELNEP…IAKLAAKIAV (195 aa)) is the ATP-grasp 1 domain. 3 residues coordinate Mg(2+): Q284, E298, and N300. Residues Q284, E298, and N300 each contribute to the Mn(2+) site. Positions 402-546 (LGIYHLELNH…YSTYGDENES (145 aa)) are oligomerization domain. Residues 547 to 929 (IVTERKSVMV…ALYKGLVAAG (383 aa)) form a carbamoyl phosphate synthetic domain region. One can recognise an ATP-grasp 2 domain in the interval 671-861 (EAALTELGIP…MANIATKVIL (191 aa)). Residues R707, R746, E752, G777, V778, H779, S780, Q820, and E832 each contribute to the ATP site. Mg(2+) is bound by residues Q820, E832, and N834. 3 residues coordinate Mn(2+): Q820, E832, and N834. Residues 930 to 1072 (ISIPTHGSVI…PTTRHEVVHA (143 aa)) form the MGS-like domain. Residues 930–1072 (ISIPTHGSVI…PTTRHEVVHA (143 aa)) form an allosteric domain region.

The protein belongs to the CarB family. Composed of two chains; the small (or glutamine) chain promotes the hydrolysis of glutamine to ammonia, which is used by the large (or ammonia) chain to synthesize carbamoyl phosphate. Tetramer of heterodimers (alpha,beta)4. Requires Mg(2+) as cofactor. It depends on Mn(2+) as a cofactor.

It carries out the reaction hydrogencarbonate + L-glutamine + 2 ATP + H2O = carbamoyl phosphate + L-glutamate + 2 ADP + phosphate + 2 H(+). It catalyses the reaction hydrogencarbonate + NH4(+) + 2 ATP = carbamoyl phosphate + 2 ADP + phosphate + 2 H(+). Its pathway is amino-acid biosynthesis; L-arginine biosynthesis; carbamoyl phosphate from bicarbonate: step 1/1. It functions in the pathway pyrimidine metabolism; UMP biosynthesis via de novo pathway; (S)-dihydroorotate from bicarbonate: step 1/3. In terms of biological role, large subunit of the glutamine-dependent carbamoyl phosphate synthetase (CPSase). CPSase catalyzes the formation of carbamoyl phosphate from the ammonia moiety of glutamine, carbonate, and phosphate donated by ATP, constituting the first step of 2 biosynthetic pathways, one leading to arginine and/or urea and the other to pyrimidine nucleotides. The large subunit (synthetase) binds the substrates ammonia (free or transferred from glutamine from the small subunit), hydrogencarbonate and ATP and carries out an ATP-coupled ligase reaction, activating hydrogencarbonate by forming carboxy phosphate which reacts with ammonia to form carbamoyl phosphate. The protein is Carbamoyl phosphate synthase large chain of Bacillus cytotoxicus (strain DSM 22905 / CIP 110041 / 391-98 / NVH 391-98).